The following is a 308-amino-acid chain: UPF0282 protein M164_2122 (308 aa).

This sequence belongs to the UPF0282 family.

In Saccharolobus islandicus (strain M.16.4 / Kamchatka #3) (Sulfolobus islandicus), this protein is UPF0282 protein M164_2122.